The primary structure comprises 362 residues: Chorismate synthase (362 aa).

Positions 48 and 54 each coordinate NADP(+). Residues 131–133 (RSS), 243–244 (NA), Gly-287, 302–306 (KPTSS), and Arg-328 each bind FMN.

It belongs to the chorismate synthase family. Homotetramer. FMNH2 serves as cofactor.

The enzyme catalyses 5-O-(1-carboxyvinyl)-3-phosphoshikimate = chorismate + phosphate. It participates in metabolic intermediate biosynthesis; chorismate biosynthesis; chorismate from D-erythrose 4-phosphate and phosphoenolpyruvate: step 7/7. In terms of biological role, catalyzes the anti-1,4-elimination of the C-3 phosphate and the C-6 proR hydrogen from 5-enolpyruvylshikimate-3-phosphate (EPSP) to yield chorismate, which is the branch point compound that serves as the starting substrate for the three terminal pathways of aromatic amino acid biosynthesis. This reaction introduces a second double bond into the aromatic ring system. This chain is Chorismate synthase, found in Rhodopseudomonas palustris (strain BisB18).